Here is a 371-residue protein sequence, read N- to C-terminus: Repetitive proline-rich cell wall protein 2 (371 aa).

An N-terminal signal peptide occupies residues 1 to 22 (MASSNLLVLLLFALFAIPRGLA). 66 repeat units span residues 32-36 (PPVYK), 37-41 (PPVEK), 42-46 (PPVYK), 47-51 (PPVEK), 52-56 (PPVYK), 57-61 (PPVEK), 62-66 (PPVYK), 67-71 (PPVEK), 72-76 (PPVYK), 77-81 (PPVEK), 82-86 (PPVYK), 87-91 (PPVEK), 92-96 (PPVYK), 97-101 (PPVEK), 102-106 (PPVYK), 107-111 (PPVEK), 112-116 (PPVYK), 117-121 (PPVEK), 122-126 (PPVYK), 127-131 (PPVEK), 132-136 (PPVYK), 137-141 (PPVEK), 142-146 (PPVYK), 147-151 (PPVEK), 152-156 (PPVYK), 157-161 (PPVEK), 162-166 (PPVYK), 167-171 (PPVEK), 172-176 (PPVYK), 177-181 (PPVEK), 182-186 (PPVYK), 187-191 (PPVEK), 192-196 (PPVYK), 197-201 (PPVEK), 202-206 (PPVYK), 207-211 (PPVEK), 212-216 (PPVYK), 217-221 (PPVEK), 222-226 (PPVYK), 227-231 (PPVEK), 232-236 (PPIYK), 237-241 (PPVEK), 242-246 (PPVYK), 247-251 (PPVEK), 252-256 (PPVYK), 257-261 (PPVEK), 262-266 (PPIYK), 267-271 (PPVEK), 272-276 (PPVYK), 277-281 (PPVEK), 282-286 (PPVYK), 287-291 (PPVEK), 292-296 (PPVYK), 297-301 (PPVEK), 302-306 (PPVYK), 307-311 (PPVEK), 312-316 (PPVYK), 317-321 (PPVYK), 322-326 (PPVYK), 327-331 (PPVEK), 332-336 (PPVYK), 337-341 (PPVYK), 342-346 (PPVEK), 347-351 (PPVYK), 352-356 (PPVYK), and 357-361 (PPVEK). The segment at 32-366 (PPVYKPPVEK…PPVEKPPVYG (335 aa)) is 67 X 5 AA approximate tandem repeats of P-P-[IV]-[EY]-K. The tract at residues 49 to 317 (VEKPPVYKPP…PVEKPPVYKP (269 aa)) is disordered. The tract at residues 339–371 (VYKPPVEKPPVYKPPVYKPPVEKPPVYGPPHHP) is disordered. One copy of the 67; approximate repeat lies at 362–366 (PPVYG).

The protein belongs to the plant proline-rich protein superfamily. ENOD12 family. As to expression, expressed in hypocotyls, roots and mature root nodules.

It is found in the secreted. Its subcellular location is the cell wall. Its function is as follows. This is a developmentally regulated putative cell wall protein. In Medicago truncatula (Barrel medic), this protein is Repetitive proline-rich cell wall protein 2 (PRP2).